A 1090-amino-acid polypeptide reads, in one-letter code: Solute carrier family 38 member 10 (1090 aa).

The next 10 membrane-spanning stretches (helical) occupy residues 9–31, 36–58, 84–104, 123–143, 153–173, 229–249, 272–292, 323–343, 345–365, and 378–398; these read WGLI…PFCF, IVLG…MFLV, LVET…YVVI, TVRV…LSLQ, FSAM…LSSL, IFAS…FFGY, MIRV…ILPC, VLTL…PNVE, ILGF…PALI, and VVLW…LSVT. Residue serine 441 is modified to Phosphoserine. Composition is skewed to basic and acidic residues over residues 441-454, 493-508, 517-528, 544-560, 587-596, and 607-623; these read SQEK…KEVL, EAHR…KVVV, PEEKKPPPRLPD, ESEK…EGKR, PRKEDSRPGN, and DSVE…REPA. 3 disordered regions span residues 441-675, 729-831, and 857-1037; these read SQEK…AGSK, EIRQ…IDLR, and KAAP…ELAP. Residues serine 608 and serine 636 each carry the phosphoserine modification. 3 stretches are compositionally biased toward basic and acidic residues: residues 654 to 665, 729 to 744, and 758 to 767; these read EAAEQREKKEAE, EIRQ…KPKP, and GQEEEAEHAG. At threonine 769 the chain carries Phosphothreonine. Serine 887 carries the phosphoserine modification. Over residues 923-936 the composition is skewed to polar residues; the sequence is RQSGPTKAPVQTQA. Basic and acidic residues-rich tracts occupy residues 954–973, 1004–1013, and 1026–1037; these read PEVR…EQHK, ENAKPNRDLK, and DLASHPEQELAP.

The protein belongs to the amino acid/polyamine transporter 2 family. In terms of tissue distribution, expressed in neurons, astrocytes and epithelial cells scattered throughout the central nervous system structures including striatum, ependyma, cerebral cortex, hippocampus, hypothalamus, thalamus, pons, and cerebellum (at protein level). Highly expressed in paraventricular hypothalamic nucleus, suprachiasmatic nucleus, anterior hypothalamic area central part, in lateral ventricule and in dorsal 3rd ventricule (at protein level). Expressed in choroid plexus epithelial cells (at protein level).

It is found in the membrane. The catalysed reaction is L-glutamate(out) = L-glutamate(in). It carries out the reaction L-glutamine(out) = L-glutamine(in). The enzyme catalyses L-alanine(in) = L-alanine(out). It catalyses the reaction L-serine(in) = L-serine(out). The catalysed reaction is L-leucine(in) = L-leucine(out). In terms of biological role, facilitates bidirectional transport of amino acids. May act as a glutamate sensor that regulates glutamate-glutamine cycle and mTOR signaling in the brain. The transport mechanism remains to be elucidated. This chain is Solute carrier family 38 member 10, found in Mus musculus (Mouse).